The primary structure comprises 352 residues: MSSQLALRGPELSANLCKPEEDTLRVLVTGGSGNVGVGVVRALNAARHHVVVASRGYSPALLPEGVRAVRLERTEPDAYTRLVAAEKPDAVIDLTCHDAADAAVTLRACAGVDRVVVVSSVTAAGPATTTPVTEATAAPPLSEYGIDKLAVEETVRAAWADGTSQALLVRLGAVYRLGADLDGQLAEDGCWLAHAAAGAPAVLADDGAARWNLLHADDAGAALAELLANDRARGVLVHLASRHPLPWRELYERVHHALGRPFNPVSVPAEWAAEQLEDAEFLAETSRWDQVFDLGLLDRLAPSYQERGGPSRVTEVALWLIRQGRVGDAELGAEIQELPARLAAVRTAPGLV.

This sequence belongs to the NAD(P)-dependent epimerase/dehydratase family.

The enzyme catalyses 2'-dehydrokanamycin A + NADPH + H(+) = kanamycin A + NADP(+). It functions in the pathway antibiotic biosynthesis; kanamycin biosynthesis. Mediates the conversion of 2'-dehydrokanamycin A into kanamycin A. In Streptomyces kanamyceticus, this protein is 2'-dehydrokanamycin reductase (kanK).